Reading from the N-terminus, the 334-residue chain is Photosystem II assembly protein Ycf48 (334 aa).

The N-terminal stretch at 1–22 (MAKMLKLWRLVLLAAFSLLLMA) is a signal peptide.

Belongs to the Ycf48 family. In terms of assembly, part of early PSII assembly complexes which includes D1 (psbA) and PsbI; not found in mature PSII. Binds to the lumenal side of PSII complexes. Interacts with YidC.

Its subcellular location is the cellular thylakoid lumen. In terms of biological role, a factor required for optimal assembly of photosystem II (PSII), acting in the early stages of PSII assembly. Also plays a role in replacement of photodamaged D1 (psbA). Assists YidC in synthesis of chlorophyll-binding proteins. The protein is Photosystem II assembly protein Ycf48 of Synechococcus sp. (strain JA-3-3Ab) (Cyanobacteria bacterium Yellowstone A-Prime).